A 213-amino-acid chain; its full sequence is Putative cytochrome c-type biogenesis protein HI_1454 (213 aa).

The next 6 membrane-spanning stretches (helical) occupy residues 15–35 (GLAS…FGIL), 46–66 (FLFI…FGFL), 77–97 (IIAG…FKIG), 118–138 (AFVL…PILA), 154–174 (ASMM…FSFF), and 192–212 (FKIG…TNNF).

Belongs to the DsbD family.

It localises to the cell membrane. Its function is as follows. Could be involved in cytochrome c synthesis. The polypeptide is Putative cytochrome c-type biogenesis protein HI_1454 (Haemophilus influenzae (strain ATCC 51907 / DSM 11121 / KW20 / Rd)).